Here is a 316-residue protein sequence, read N- to C-terminus: uncharacterized protein (316 aa).

This sequence belongs to the chlamydial CPn_0441/CT_007/TC_0275 family.

This is an uncharacterized protein from Chlamydia pneumoniae (Chlamydophila pneumoniae).